Here is a 187-residue protein sequence, read N- to C-terminus: Large ribosomal subunit protein bL9 (187 aa).

The disordered stretch occupies residues 168–187 (EEAPAEEDVAAEETSEAAEA).

Belongs to the bacterial ribosomal protein bL9 family.

Its function is as follows. Binds to the 23S rRNA. This Paramagnetospirillum magneticum (strain ATCC 700264 / AMB-1) (Magnetospirillum magneticum) protein is Large ribosomal subunit protein bL9.